Consider the following 282-residue polypeptide: Energy-coupling factor transporter ATP-binding protein EcfA1 (282 aa).

In terms of domain architecture, ABC transporter spans 6–243 (ISFDHVTFTY…VEMLKRIGLD (238 aa)). ATP is bound at residue 40–47 (GHNGSGKS).

It belongs to the ABC transporter superfamily. Energy-coupling factor EcfA family. In terms of assembly, forms a stable energy-coupling factor (ECF) transporter complex composed of 2 membrane-embedded substrate-binding proteins (S component), 2 ATP-binding proteins (A component) and 2 transmembrane proteins (T component).

It is found in the cell membrane. Functionally, ATP-binding (A) component of a common energy-coupling factor (ECF) ABC-transporter complex. Unlike classic ABC transporters this ECF transporter provides the energy necessary to transport a number of different substrates. The polypeptide is Energy-coupling factor transporter ATP-binding protein EcfA1 (Lactobacillus delbrueckii subsp. bulgaricus (strain ATCC 11842 / DSM 20081 / BCRC 10696 / JCM 1002 / NBRC 13953 / NCIMB 11778 / NCTC 12712 / WDCM 00102 / Lb 14)).